The following is a 1067-amino-acid chain: Protein CLEC16A homolog (1067 aa).

Residues 50 to 199 (LRCIAEILIW…AVRTISLNVY (150 aa)) enclose the FPL domain. The helical transmembrane segment at 333–353 (SIVALFLLSLVFLVVSHAPLV) threads the bilayer. The segment covering 409-418 (SSSSYALSED) has biased composition (low complexity). 4 disordered regions span residues 409-434 (SSSSYALSEDSGVESSSPATTELDSQ), 837-861 (ASSSGGSGNSSGSSSRSSHHRPMFS), 876-993 (SNSA…SRSH), and 1037-1067 (QSSEETSFIGSDGNEATGGSEGRRRGAIETV). The span at 421–432 (VESSSPATTELD) shows a compositional bias: polar residues. Residues 876-888 (SNSAGVSRTQMAP) show a composition bias toward polar residues. Over residues 917–926 (RADHSDRERS) the composition is skewed to basic and acidic residues. A compositionally biased stretch (low complexity) spans 927 to 947 (PSVSMGSHSSSQSRENSQPRS). Residues 951 to 974 (RSRESSPRMPRPRSEEIPLEDFQH) are compositionally biased toward basic and acidic residues. Over residues 975 to 993 (SRNNSPHSRGNPSPASRSH) the composition is skewed to polar residues. Residues 1057–1067 (EGRRRGAIETV) show a composition bias toward basic and acidic residues.

Belongs to the CLEC16A/gop-1 family. As to quaternary structure, interacts with the class C Vps-HOPS complex components; Car, Dor and Vps16a.

Its subcellular location is the cytoplasmic vesicle. It localises to the autophagosome membrane. The protein resides in the late endosome membrane. The protein localises to the golgi apparatus membrane. Required for mitophagy, autophagy and endosome maturation, possibly by acting in multiple membrane trafficking pathways. Required for endosome trafficking and maturation. Functions with the class C Vps-HOPS complex member Vps16a to promote endosomal maturation into degradative late endosomes and lysosomes. In response to starvation, functions at an early stage of autophagy to promote autophagosome growth and efficient autophagy. Essential for the recruitment of lva-positive Golgi elements to autophagosomes. Likely to function by promoting membrane traffic from the Golgi complex to the developing autophagosomes. Also regulates synaptic growth at the neuromuscular junctions (NMJ) by down-regulating BMP signaling. The polypeptide is Protein CLEC16A homolog (Drosophila melanogaster (Fruit fly)).